The sequence spans 57 residues: DNA-directed RNA polymerase subunit Rpo6 (57 aa).

The protein belongs to the archaeal Rpo6/eukaryotic RPB6 RNA polymerase subunit family. Part of the RNA polymerase complex.

It is found in the cytoplasm. It catalyses the reaction RNA(n) + a ribonucleoside 5'-triphosphate = RNA(n+1) + diphosphate. DNA-dependent RNA polymerase (RNAP) catalyzes the transcription of DNA into RNA using the four ribonucleoside triphosphates as substrates. In Thermococcus gammatolerans (strain DSM 15229 / JCM 11827 / EJ3), this protein is DNA-directed RNA polymerase subunit Rpo6.